The primary structure comprises 132 residues: MAGRGKTLGSGVAKKSTSRSSKAGLQFPVGRIARFLKNGKYATRVGAGAPVYLAAVLEYLAAEVLELAGNAARDNKKTRIVPRHIQLAVRNDEELSKLLGDVTIANGGVMPNIHSLLLPKKAGASKPSADED.

Belongs to the histone H2A family. In terms of assembly, the nucleosome is a histone octamer containing two molecules each of H2A, H2B, H3 and H4 assembled in one H3-H4 heterotetramer and two H2A-H2B heterodimers. The octamer wraps approximately 147 bp of DNA. Not ubiquitinated. Expressed mainly in non-dividing tissues of the plant. Also found in meristems and dividing cells.

It is found in the nucleus. The protein resides in the chromosome. Core component of nucleosome. Nucleosomes wrap and compact DNA into chromatin, limiting DNA accessibility to the cellular machineries which require DNA as a template. Histones thereby play a central role in transcription regulation, DNA repair, DNA replication and chromosomal stability. DNA accessibility is regulated via a complex set of post-translational modifications of histones, also called histone code, and nucleosome remodeling. The sequence is that of Probable histone H2A.2 from Arabidopsis thaliana (Mouse-ear cress).